A 576-amino-acid chain; its full sequence is Type II restriction enzyme BsuRI (576 aa).

In terms of assembly, monomer. Mg(2+) serves as cofactor.

The catalysed reaction is Endonucleolytic cleavage of DNA to give specific double-stranded fragments with terminal 5'-phosphates.. Functionally, a P subtype restriction enzyme that recognizes the double-stranded sequence 5'-GGCC-3' and cleaves after G-2. The protein is Type II restriction enzyme BsuRI (hsdRR) of Bacillus subtilis.